The following is a 399-amino-acid chain: Bombesin receptor subtype-3 (399 aa).

The Extracellular segment spans residues 1 to 41 (MSQKQPQSPNQTLISITNDTESSSSVVSNDTTNKGWTGDNS). N-linked (GlcNAc...) asparagine glycosylation is found at Asn10 and Asn18. A helical membrane pass occupies residues 42–63 (PGIEALCAIYITYAVIISVGIL). Residues 64–82 (GNAILIKVFFKTKSMQTVP) are Cytoplasmic-facing. A helical transmembrane segment spans residues 83–103 (NIFITSLALGDLLLLLTCVPV). At 104-121 (DATHYLAEGWLFGRIGCK) the chain is on the extracellular side. Cys120 and Cys203 form a disulfide bridge. The helical transmembrane segment at 122–143 (VLSFIRLTSVGVSVFTLTILSA) threads the bilayer. Over 144–163 (DRYKAVVKPLERQPSNAILK) the chain is Cytoplasmic. The chain crosses the membrane as a helical span at residues 164–184 (TCAKAGCIWIMSMIFALPEAI). Residues 185–220 (FSNVHTLRDPNKNMTSEWCAFYPVSEKLLQEIHALL) are Extracellular-facing. The chain crosses the membrane as a helical span at residues 221–241 (SFLVFYIIPLSIISVYYSLIA). Topologically, residues 242–272 (RTLYKSTLNIPTEEQSHARKQVESRKRIAKT) are cytoplasmic. The chain crosses the membrane as a helical span at residues 273–293 (VLVLVALFALCWLPNHLLNLY). Topologically, residues 294–313 (HSFTHKAYEDSSAIHFIVTI) are extracellular. The chain crosses the membrane as a helical span at residues 314 to 333 (FSRVLAFSNSCVNPFALYWL). The Cytoplasmic segment spans residues 334 to 399 (SKTFQKQFKA…RPMKKEENRV (66 aa)). The S-palmitoyl cysteine moiety is linked to residue Cys347.

Belongs to the G-protein coupled receptor 1 family. Interacts with C6orf89. Mainly in uteri of pregnant animals.

The protein localises to the cell membrane. In terms of biological role, role in sperm cell division, maturation, or function. The relative order of ligand affinity is GRP = neuromedin-C &gt;&gt; neuromedin-B. This receptor mediates its action by association with G proteins that activate a phosphatidylinositol-calcium second messenger system. The polypeptide is Bombesin receptor subtype-3 (BRS3) (Cavia porcellus (Guinea pig)).